We begin with the raw amino-acid sequence, 174 residues long: MTTIVSVRRNNQVVIAGDGQVSLGNTVMKGNAKKVRRLYHNKVLAGFAGGTADAFTLFERFEAKLEMHQGHLLRSAVELAKDWRTDRMLRKLEAMLVVADAEASLIITGNGDVVQPEYDLVAIGSGGNYAQAAALALLQNTELSALEIAEKSLTIAGDICVFTNQFKTIEELNY.

Threonine 2 is an active-site residue. Residues glycine 157, cysteine 160, and threonine 163 each coordinate Na(+).

The protein belongs to the peptidase T1B family. HslV subfamily. In terms of assembly, a double ring-shaped homohexamer of HslV is capped on each side by a ring-shaped HslU homohexamer. The assembly of the HslU/HslV complex is dependent on binding of ATP.

It is found in the cytoplasm. It carries out the reaction ATP-dependent cleavage of peptide bonds with broad specificity.. Its activity is regulated as follows. Allosterically activated by HslU binding. Functionally, protease subunit of a proteasome-like degradation complex believed to be a general protein degrading machinery. The protein is ATP-dependent protease subunit HslV of Shewanella putrefaciens (strain CN-32 / ATCC BAA-453).